Here is an 865-residue protein sequence, read N- to C-terminus: Leucine-rich repeat-containing protein 66 (865 aa).

The chain crosses the membrane as a helical span at residues 4–24; the sequence is FYARVTVMVTGLCFVGTVTNP. Asparagine 42 carries N-linked (GlcNAc...) asparagine glycosylation. LRR repeat units lie at residues 138–160, 161–182, 185–206, 209–230, and 235–255; these read RLKV…WKLK, PLCS…GFHG, QLKS…AFKG, KLQV…VTIA, and NLEL…ANFQ. Asparagine 248 is a glycosylation site (N-linked (GlcNAc...) asparagine). Residues 366–386 form a helical membrane-spanning segment; sequence ALAVCLSVFITFVVAFCLGAF. Disordered regions lie at residues 463-522 and 654-749; these read RMLG…PGQH and DTPS…AESV. A compositionally biased stretch (polar residues) spans 470–479; the sequence is MDPSSQQSPG. Basic and acidic residues predominate over residues 675 to 688; that stretch reads AVQRDASFDPHDDL. Over residues 702-713 the composition is skewed to polar residues; it reads FTLSSEGSQDTR. 2 positions are modified to phosphoserine: serine 714 and serine 748. Residues 728–759 enclose the LRRNT domain; that stretch reads SQPLPSRNLGEYKDSVTSAESVEDITSQQTLE. N-linked (GlcNAc...) asparagine glycosylation occurs at asparagine 787. The tract at residues 840–865 is disordered; the sequence is FPNIDSSPSPPCSDQDPSDPEEHDTK. Residues 855 to 865 show a composition bias toward acidic residues; the sequence is DPSDPEEHDTK.

The protein resides in the membrane. The protein is Leucine-rich repeat-containing protein 66 (Lrrc66) of Rattus norvegicus (Rat).